The chain runs to 336 residues: F420-dependent glucose-6-phosphate dehydrogenase (336 aa).

Residue aspartate 39 participates in coenzyme F420-(gamma-Glu)n binding. Catalysis depends on histidine 40, which acts as the Proton donor. Residues threonine 76 and 107 to 108 (TG) contribute to the coenzyme F420-(gamma-Glu)n site. Glutamate 109 acts as the Proton acceptor in catalysis. Coenzyme F420-(gamma-Glu)n contacts are provided by residues asparagine 112, 177–178 (GG), and 180–181 (VV). Residues threonine 195, lysine 198, lysine 259, and arginine 283 each contribute to the substrate site.

Belongs to the F420-dependent glucose-6-phosphate dehydrogenase family. In terms of assembly, homodimer.

It carries out the reaction oxidized coenzyme F420-(gamma-L-Glu)(n) + D-glucose 6-phosphate + H(+) = 6-phospho-D-glucono-1,5-lactone + reduced coenzyme F420-(gamma-L-Glu)(n). Functionally, catalyzes the coenzyme F420-dependent oxidation of glucose 6-phosphate (G6P) to 6-phosphogluconolactone. Appears to have a role in resistance to oxidative stress, via its consumption of G6P that serves as a source of reducing power to combat oxidative stress in mycobacteria. This Mycolicibacterium fortuitum (Mycobacterium fortuitum) protein is F420-dependent glucose-6-phosphate dehydrogenase.